The following is a 371-amino-acid chain: Glutamate 5-kinase (371 aa).

Lys12 contacts ATP. Substrate contacts are provided by Ser52, Asp136, and Asn148. ATP-binding positions include 168–169 and 210–216; these read SD and TGGMRTK. The PUA domain occupies 275 to 354; it reads QGEILVDEGA…EDIAEKFGYS (80 aa).

It belongs to the glutamate 5-kinase family.

Its subcellular location is the cytoplasm. The enzyme catalyses L-glutamate + ATP = L-glutamyl 5-phosphate + ADP. It functions in the pathway amino-acid biosynthesis; L-proline biosynthesis; L-glutamate 5-semialdehyde from L-glutamate: step 1/2. Catalyzes the transfer of a phosphate group to glutamate to form L-glutamate 5-phosphate. In Idiomarina loihiensis (strain ATCC BAA-735 / DSM 15497 / L2-TR), this protein is Glutamate 5-kinase.